Reading from the N-terminus, the 229-residue chain is Protein rep (229 aa).

Tyr-214 serves as a coordination point for DNA.

The protein belongs to the Gram-positive plasmids replication protein type 1 family.

Produces a single-strand nick in a specific site of the plasmid, and this nick results in single-strand replication by rolling circle mechanism. This Staphylococcus aureus protein is Protein rep.